We begin with the raw amino-acid sequence, 878 residues long: NUT family member 2B (878 aa).

Disordered regions lie at residues 273-324 (WSQG…DDSC), 417-512 (QKSQ…PEEI), 527-560 (LLGPSLGATGEPEKQREEGKVKQPQEEDWTPPDP), 624-693 (PPLK…GMAR), 709-757 (LRAA…EEEE), and 775-878 (WLPQ…HCSQ). Composition is skewed to pro residues over residues 278-288 (PLPPPPPPAAQ) and 427-444 (CLPPPATPRLEPRGPPAP). A compositionally biased stretch (basic residues) spans 476 to 487 (TKARRPPPRPHR). Residues 537 to 551 (EPEKQREEGKVKQPQ) are compositionally biased toward basic and acidic residues.

It belongs to the NUT family.

The polypeptide is NUT family member 2B (NUTM2B) (Homo sapiens (Human)).